A 596-amino-acid chain; its full sequence is MTSPSPRIQIISTDSAVASPQRIQIVTDQQTGQKIQIVTAVDASGSPKQQFILTSPDGAGTGKVILASPETSSAKQLIFTTSDNLVPGRIQIVTDSASVERLLGKTDVQRPQVVEYCVVCGDKASGRHYGAVSCEGCKGFFKRSVRKNLTYSCRSNQDCIINKHHRNRCQFCRLKKCLEMGMKMESVQSERKPFDVQREKPSNCAASTEKIYIRKDLRSPLIATPTFVADKDGARQTGLLDPGMLVNIQQPLIREDGTVLLATDSKAETSQGALGTLANVVTSLANLSESLNNGDTSEIQPEDQSASEITRAFDTLAKALNTTDSSSSPSLADGIDTSGGGSIHVISRDQSTPIIEVEGPLLSDTHVTFKLTMPSPMPEYLNVHYICESASRLLFLSMHWARSIPAFQALGQDCNTSLVRACWNELFTLGLAQCAQVMSLSTILAAIVNHLQNSIQEDKLSGDRIKQVMEHIWKLQEFCNSMAKLDIDGYEYAYLKAIVLFSPDHPGLTSTSQIEKFQEKAQMELQDYVQKTYSEDTYRLARILVRLPALRLMSSNITEELFFTGLIGNVSIDSIIPYILKMETAEYNGQITGASL.

A Phosphoserine; by MAPK modification is found at Ser19. Ser46 bears the Phosphoserine mark. A phosphoserine; by MAPK mark is found at Ser55 and Ser68. Residue Ser98 is modified to Phosphoserine. Residues 114–189 constitute a DNA-binding region (nuclear receptor); the sequence is VEYCVVCGDK…MGMKMESVQS (76 aa). 2 NR C4-type zinc fingers span residues 117–137 and 153–177; these read CVVCGDKASGRHYGAVSCEGC and CRSNQDCIINKHHRNRCQFCRLKKC. Residue Lys192 forms a Glycyl lysine isopeptide (Lys-Gly) (interchain with G-Cter in SUMO2) linkage. Residue Ser219 is modified to Phosphoserine. An N6-acetyllysine modification is found at Lys231. The NR LBD domain occupies 341–583; it reads GSIHVISRDQ…SIIPYILKME (243 aa).

This sequence belongs to the nuclear hormone receptor family. NR2 subfamily. In terms of assembly, homodimer; can bind DNA as homodimer. Heterodimer; binds DNA as a heterodimer with NR2C1 required for chromatin remodeling and for binding to promoter regions such as globin DR1 repeats. Interacts with PCAF; the interaction preferentially occurs on the non-phosphorylated form and induces NR2C2-mediated transactivation activity and does not require the ligand-binding domain. Interacts (MAPK-mediated phosphorylated form) with NRIP1; the interaction promotes repression of NR2C2-mediated activity. Interacts with NR2C2AP; the interaction represses selective NR2C2-mediated transcriptional activity. Interacts with NLRP10. Interacts (via ligand-binding region) with transcriptional corepressor JAZF1; the interaction promotes NR2C2-mediated transcriptional repression. In terms of processing, phosphorylation on Ser-19 and Ser-68 is an important regulator of NR2C2-mediated transcriptional activity. Phosphorylation on these residues recruits the corepressor, NRIP1, leading to transcripional repression, whereas the non-phosphorylated form preferentially recruits the coactivator, PCAF.

It is found in the nucleus. Functionally, orphan nuclear receptor that can act as a repressor or activator of transcription. An important repressor of nuclear receptor signaling pathways such as retinoic acid receptor, retinoid X, vitamin D3 receptor, thyroid hormone receptor and estrogen receptor pathways. May regulate gene expression during the late phase of spermatogenesis. Together with NR2C1, forms the core of the DRED (direct repeat erythroid-definitive) complex that represses embryonic and fetal globin transcription including that of GATA1. Binds to hormone response elements (HREs) consisting of two 5'-AGGTCA-3' half site direct repeat consensus sequences. Plays a fundamental role in early embryonic development and embryonic stem cells. Required for normal spermatogenesis and cerebellum development. Appears to be important for neurodevelopmentally regulated behavior. Activates transcriptional activity of LHCG. Antagonist of PPARA-mediated transactivation. This chain is Nuclear receptor subfamily 2 group C member 2 (NR2C2), found in Homo sapiens (Human).